We begin with the raw amino-acid sequence, 920 residues long: Protein O-mannosyl-transferase TMTC3 (920 aa).

The Cytoplasmic segment spans residues 1–14; it reads MLEGKMADINFKEV. A helical membrane pass occupies residues 15-35; sequence TLIVSVVAACYWNSLFCGFVF. The Extracellular portion of the chain corresponds to 36 to 94; sequence DDVSAILDNKDLHPSTPLKTLFQNDFWGTPMSEERSHKSYRPLTVLTFRLNYLLSELKP. A helical membrane pass occupies residues 95 to 115; it reads MSYHLLNTVFHAVVSVIFLKV. At 116–125 the chain is on the cytoplasmic side; the sequence is CRLFLDKRSS. 2 helical membrane-spanning segments follow: residues 126–144 and 145–163; these read MIAA…AVTG and VVGR…AFLS. The Cytoplasmic portion of the chain corresponds to 164–171; that stretch reads YTKSKGPD. The helical transmembrane segment at 172–192 threads the bilayer; the sequence is NSIVWTPIVLTVFLVAVATLC. Over 193–198 the chain is Extracellular; it reads KEQGIT. Residues 199 to 219 form a helical membrane-spanning segment; that stretch reads VVGICCVYEVFVAQGYTLPML. At 220–236 the chain is on the cytoplasmic side; the sequence is CTVAGQFLRGKGSIPLS. The chain crosses the membrane as a helical span at residues 237–257; sequence MLQTLVKLIVLMLSTLLLVVV. Over 258 to 325 the chain is Extracellular; it reads RVQVIQSQLP…LIESFLDVRN (68 aa). The chain crosses the membrane as a helical span at residues 326 to 346; it reads LATFAFFCFLGALGIFSLRYP. Residues 347 to 358 lie on the Cytoplasmic side of the membrane; the sequence is GDSSKTVLMALC. The chain crosses the membrane as a helical span at residues 359–379; the sequence is LMALPFIPASNLFFPVGFVVA. Residues 380–381 lie on the Extracellular side of the membrane; it reads ER. A helical membrane pass occupies residues 382-402; that stretch reads VLYVPSMGFCILVAHGWQKIS. The Cytoplasmic portion of the chain corresponds to 403–409; that stretch reads NKSVLKK. A helical membrane pass occupies residues 410–428; that stretch reads LSWVCLSMVILTHALKTLH. Over 429-920 the chain is Extracellular; it reads RNWDWESEYT…EEIERILNGE (492 aa). 9 TPR repeats span residues 451–484, 485–518, 534–567, 568–601, 602–635, 673–706, 707–740, 742–775, and 776–809; these read AKLW…QPDD, IGAH…MPQI, NVYI…RPDF, KQAY…DRNN, ADLW…NPKH, ANGY…QPDF, RSAL…YPDH, KGLI…DPSN, and VQGK…APHE. Asn499 carries N-linked (GlcNAc...) asparagine glycosylation. Tyr508 is subject to Phosphotyrosine. An N-linked (GlcNAc...) asparagine glycan is attached at Asn546. The interval 829 to 897 is disordered; the sequence is VEQPLAPADK…APHKTTKDIK (69 aa). Over residues 840–858 the composition is skewed to basic and acidic residues; the sequence is PGTEEREEIPSEDVKEISS. The span at 867–880 shows a compositional bias: low complexity; the sequence is KTNNNRNSKSNKQS. Residues 887 to 897 are compositionally biased toward basic and acidic residues; the sequence is DAPHKTTKDIK.

Belongs to the TMTC family.

The protein localises to the membrane. It is found in the endoplasmic reticulum. The catalysed reaction is a di-trans,poly-cis-dolichyl beta-D-mannosyl phosphate + L-seryl-[protein] = 3-O-(alpha-D-mannosyl)-L-seryl-[protein] + a di-trans,poly-cis-dolichyl phosphate + H(+). The enzyme catalyses a di-trans,poly-cis-dolichyl beta-D-mannosyl phosphate + L-threonyl-[protein] = 3-O-(alpha-D-mannosyl)-L-threonyl-[protein] + a di-trans,poly-cis-dolichyl phosphate + H(+). It participates in protein modification; protein glycosylation. In terms of biological role, transfers mannosyl residues to the hydroxyl group of serine or threonine residues. The 4 members of the TMTC family are O-mannosyl-transferases dedicated primarily to the cadherin superfamily, each member seems to have a distinct role in decorating the cadherin domains with O-linked mannose glycans at specific regions. Also acts as O-mannosyl-transferase on other proteins such as PDIA3. Involved in the positive regulation of proteasomal protein degradation in the endoplasmic reticulum (ER), and the control of ER stress response. This is Protein O-mannosyl-transferase TMTC3 from Mus musculus (Mouse).